A 122-amino-acid chain; its full sequence is Large ribosomal subunit protein uL14 (122 aa).

Belongs to the universal ribosomal protein uL14 family. Part of the 50S ribosomal subunit. Forms a cluster with proteins L3 and L19. In the 70S ribosome, L14 and L19 interact and together make contacts with the 16S rRNA in bridges B5 and B8.

In terms of biological role, binds to 23S rRNA. Forms part of two intersubunit bridges in the 70S ribosome. In Delftia acidovorans (strain DSM 14801 / SPH-1), this protein is Large ribosomal subunit protein uL14.